The following is a 543-amino-acid chain: Chaperonin GroEL 1 (543 aa).

Residues 29 to 32, 86 to 90, glycine 413, 479 to 481, and aspartate 495 contribute to the ATP site; these read TLGP, DGTTT, and NAA.

The protein belongs to the chaperonin (HSP60) family. As to quaternary structure, forms a cylinder of 14 subunits composed of two heptameric rings stacked back-to-back. Interacts with the co-chaperonin GroES.

The protein resides in the cytoplasm. It carries out the reaction ATP + H2O + a folded polypeptide = ADP + phosphate + an unfolded polypeptide.. Its function is as follows. Together with its co-chaperonin GroES, plays an essential role in assisting protein folding. The GroEL-GroES system forms a nano-cage that allows encapsulation of the non-native substrate proteins and provides a physical environment optimized to promote and accelerate protein folding. The polypeptide is Chaperonin GroEL 1 (Prochlorococcus marinus (strain NATL2A)).